Here is a 276-residue protein sequence, read N- to C-terminus: 2-dehydro-3-deoxyphosphooctonate aldolase (276 aa).

The protein belongs to the KdsA family.

It localises to the cytoplasm. The enzyme catalyses D-arabinose 5-phosphate + phosphoenolpyruvate + H2O = 3-deoxy-alpha-D-manno-2-octulosonate-8-phosphate + phosphate. It participates in carbohydrate biosynthesis; 3-deoxy-D-manno-octulosonate biosynthesis; 3-deoxy-D-manno-octulosonate from D-ribulose 5-phosphate: step 2/3. The protein operates within bacterial outer membrane biogenesis; lipopolysaccharide biosynthesis. The sequence is that of 2-dehydro-3-deoxyphosphooctonate aldolase from Xanthomonas axonopodis pv. citri (strain 306).